The primary structure comprises 240 residues: Ribonuclease HII (240 aa).

In terms of domain architecture, RNase H type-2 spans glycine 27 to aspartate 226. A divalent metal cation is bound by residues aspartate 33, glutamate 34, and aspartate 127.

Belongs to the RNase HII family. The cofactor is Mn(2+). Mg(2+) is required as a cofactor.

Its subcellular location is the cytoplasm. The enzyme catalyses Endonucleolytic cleavage to 5'-phosphomonoester.. Its function is as follows. Endonuclease that specifically degrades the RNA of RNA-DNA hybrids. The polypeptide is Ribonuclease HII (Parafrankia sp. (strain EAN1pec)).